Consider the following 676-residue polypeptide: DNA ligase (676 aa).

NAD(+) contacts are provided by residues 34–38, 83–84, and Glu117; these read DQEFD and SL. Residue Lys119 is the N6-AMP-lysine intermediate of the active site. NAD(+) contacts are provided by Arg140, Glu177, Lys285, and Lys309. Residues Cys403, Cys406, Cys427, and Cys434 each coordinate Zn(2+). The 82-residue stretch at 595–676 folds into the BRCT domain; sequence NNNGLLKNKT…EWLKMLNKSG (82 aa).

This sequence belongs to the NAD-dependent DNA ligase family. LigA subfamily. Mg(2+) is required as a cofactor. The cofactor is Mn(2+).

The catalysed reaction is NAD(+) + (deoxyribonucleotide)n-3'-hydroxyl + 5'-phospho-(deoxyribonucleotide)m = (deoxyribonucleotide)n+m + AMP + beta-nicotinamide D-nucleotide.. In terms of biological role, DNA ligase that catalyzes the formation of phosphodiester linkages between 5'-phosphoryl and 3'-hydroxyl groups in double-stranded DNA using NAD as a coenzyme and as the energy source for the reaction. It is essential for DNA replication and repair of damaged DNA. The chain is DNA ligase from Pelagibacter ubique (strain HTCC1062).